We begin with the raw amino-acid sequence, 1863 residues long: Breast cancer type 1 susceptibility protein (1863 aa).

M1 is subject to N-acetylmethionine. An RING-type zinc finger spans residues 24–65; it reads CPICLELIKEPVSTKCDHIFCKFCMLKLLNQKKGPSQCPLCK. Residue K109 forms a Glycyl lysine isopeptide (Lys-Gly) (interchain with G-Cter in SUMO2) linkage. S114 is subject to Phosphoserine. The segment at 230–270 is disordered; sequence ETDVTNTEHHQPSNNDLNTTEKRAAERHPEKYQGSSVSNLH. Residues 248–260 show a composition bias toward basic and acidic residues; sequence TTEKRAAERHPEK. K301 is covalently cross-linked (Glycyl lysine isopeptide (Lys-Gly) (interchain with G-Cter in SUMO2)). A disordered region spans residues 306–338; it reads NKSKQPGLARSQHNRWAGSKETCNDRRTPSTEK. The span at 327–338 shows a compositional bias: basic and acidic residues; sequence TCNDRRTPSTEK. Residue K339 forms a Glycyl lysine isopeptide (Lys-Gly) (interchain with G-Cter in SUMO2) linkage. Residues S395, S398, S423, and S434 each carry the phosphoserine modification. Residues K443, K459, and K519 each participate in a glycyl lysine isopeptide (Lys-Gly) (interchain with G-Cter in SUMO2) cross-link. Residues 534–544 are compositionally biased toward low complexity; that stretch reads QGTNQTEQNGQ. The tract at residues 534 to 570 is disordered; that stretch reads QGTNQTEQNGQVMNITNSGHENKTKGDSIQNEKNPNP. Position 551 is a phosphoserine (S551). Glycyl lysine isopeptide (Lys-Gly) (interchain with G-Cter in SUMO2) cross-links involve residues K583 and K654. Residues 654-709 form a disordered region; that stretch reads KYNQMPVRHSRNLQLMEGKEPATGAKKSNKPNEQTSKRHDSDTFPELKLTNAPGSF. Phosphoserine occurs at positions 694, 708, and 725. Glycyl lysine isopeptide (Lys-Gly) (interchain with G-Cter in SUMO2) cross-links involve residues K734 and K739. S753 and S840 each carry phosphoserine. Residues K918 and K987 each participate in a glycyl lysine isopeptide (Lys-Gly) (interchain with G-Cter in SUMO2) cross-link. S988 carries the post-translational modification Phosphoserine; by CHEK2. S1009 is subject to Phosphoserine. K1079 participates in a covalent cross-link: Glycyl lysine isopeptide (Lys-Gly) (interchain with G-Cter in SUMO2). S1143 carries the post-translational modification Phosphoserine; by ATR; in vitro. A disordered region spans residues 1181–1216; the sequence is VQKGELSRSPSPFTHTHLAQGYRRGAKKLESSEENL. Phosphoserine occurs at positions 1189, 1191, 1211, 1217, and 1218. S1280 is modified (phosphoserine; by ATR; in vitro). A disordered region spans residues 1322 to 1387; the sequence is KQMRHQSESQ…VSEDCSGLSS (66 aa). S1328, S1336, and S1342 each carry phosphoserine. Over residues 1373–1387 the composition is skewed to polar residues; the sequence is ESETSVSEDCSGLSS. A Phosphoserine; by ATM and ATR modification is found at S1387. Residue T1394 is modified to Phosphothreonine; by ATR; in vitro. An interaction with PALB2 region spans residues 1397–1424; sequence RDTMQHNLIKLQQEMAELEAVLEQHGSQ. Residue S1423 is modified to Phosphoserine; by ATM and ATR. Residues 1440 to 1505 are disordered; sequence EDLRNPEQST…SSPSKCPSLD (66 aa). Residues 1445 to 1470 are compositionally biased toward polar residues; it reads PEQSTSEKAVLTSQKSSEYPISQNPE. S1457 carries the phosphoserine; by ATR; in vitro modification. At S1524 the chain carries Phosphoserine; by ATM. S1542 is modified (phosphoserine). Residues 1565–1596 are disordered; sequence ESGISLFSDDPESDPSEDRAPESARVGNIPSS. BRCT domains are found at residues 1642 to 1736 and 1756 to 1855; these read STER…DFEV and QDRK…TYLI.

As to quaternary structure, heterodimer with BARD1. Part of the BRCA1-associated genome surveillance complex (BASC), which contains BRCA1, MSH2, MSH6, MLH1, ATM, BLM, PMS2 and the MRE11-RAD50-NBN protein (MRN) complex. This association could be a dynamic process changing throughout the cell cycle and within subnuclear domains. Component of the BRCA1-A complex, at least composed of BRCA1, BARD1, UIMC1/RAP80, ABRAXAS1, BRCC3/BRCC36, BABAM2 and BABAM1/NBA1. Interacts (via the BRCT domains) with ABRAXAS1 (phosphorylated form); this is important for recruitment to sites of DNA damage. Can form a heterotetramer with two molecules of ABRAXAS1 (phosphorylated form). Component of the BRCA1-RBBP8 complex. Interacts (via the BRCT domains) with RBBP8 ('Ser-327' phosphorylated form); the interaction ubiquitinates RBBP8, regulates CHEK1 activation, and involves RBBP8 in BRCA1-dependent G2/M checkpoint control on DNA damage. Associates with RNA polymerase II holoenzyme. Interacts with SMC1A, NELFB, DCLRE1C, CLSPN. Interacts with CHEK1, CHEK2, BAP1, BRCC3, UBXN1 and PCLAF. Interacts (via BRCT domains) with BRIP1 (phosphorylated form). Interacts with FANCD2 (ubiquitinated form). Interacts with H2AX (phosphorylated on 'Ser-140'). Interacts (via the BRCT domains) with ACACA (phosphorylated form); the interaction prevents dephosphorylation of ACACA. Part of a BRCA complex containing BRCA1, BRCA2 and PALB2. Interacts directly with PALB2; the interaction is essential for its function in HRR. Interacts directly with BRCA2; the interaction occurs only in the presence of PALB2 which serves as the bridging protein. Interacts (via the BRCT domains) with LMO4; the interaction represses the transcriptional activity of BRCA1. Interacts (via the BRCT domains) with CCAR2 (via N-terminus); the interaction represses the transcriptional activator activity of BRCA1. Interacts with EXD2. Interacts (via C-terminus) with DHX9; this interaction is direct and links BRCA1 to the RNA polymerase II holoenzyme. Interacts with DNA helicase ZGRF1; the interaction is increased following DNA damage induction. Phosphorylated in response to IR, UV, and various stimuli that cause checkpoint activation, probably by ATM or ATR. Phosphorylation at Ser-988 by CHEK2 regulates mitotic spindle assembly. Phosphorylation by AURKA regulates centrosomal microtubule nucleation. Post-translationally, autoubiquitinated, undergoes 'Lys-6'-linked polyubiquitination. 'Lys-6'-linked polyubiquitination does not promote degradation. In terms of tissue distribution, isoform 1 and isoform 3 are widely expressed. Isoform 3 is reduced or absent in several breast and ovarian cancer cell lines.

The protein resides in the nucleus. It localises to the chromosome. It is found in the cytoplasm. The enzyme catalyses S-ubiquitinyl-[E2 ubiquitin-conjugating enzyme]-L-cysteine + [acceptor protein]-L-lysine = [E2 ubiquitin-conjugating enzyme]-L-cysteine + N(6)-ubiquitinyl-[acceptor protein]-L-lysine.. The protein operates within protein modification; protein ubiquitination. The E3 ubiquitin-protein ligase activity is inhibited by phosphorylation by AURKA. Activity is increased by phosphatase treatment. Its function is as follows. E3 ubiquitin-protein ligase that specifically mediates the formation of 'Lys-6'-linked polyubiquitin chains and plays a central role in DNA repair by facilitating cellular responses to DNA damage. It is unclear whether it also mediates the formation of other types of polyubiquitin chains. The BRCA1-BARD1 heterodimer coordinates a diverse range of cellular pathways such as DNA damage repair, ubiquitination and transcriptional regulation to maintain genomic stability. Regulates centrosomal microtubule nucleation. Required for appropriate cell cycle arrests after ionizing irradiation in both the S-phase and the G2 phase of the cell cycle. Required for FANCD2 targeting to sites of DNA damage. Inhibits lipid synthesis by binding to inactive phosphorylated ACACA and preventing its dephosphorylation. Contributes to homologous recombination repair (HRR) via its direct interaction with PALB2, fine-tunes recombinational repair partly through its modulatory role in the PALB2-dependent loading of BRCA2-RAD51 repair machinery at DNA breaks. Component of the BRCA1-RBBP8 complex which regulates CHEK1 activation and controls cell cycle G2/M checkpoints on DNA damage via BRCA1-mediated ubiquitination of RBBP8. Acts as a transcriptional activator. This is Breast cancer type 1 susceptibility protein (BRCA1) from Homo sapiens (Human).